We begin with the raw amino-acid sequence, 218 residues long: Acetyl- and succinyl-CoA transferase MT0822 (218 aa).

The N-acetyltransferase domain occupies 32–188 (DTILEGVHDP…EALLFRLTRD (157 aa)). Residues Gln-94, 109 to 113 (SGSWL), 119 to 124 (GHGYGT), 145 to 151 (SRSFVDN), and Arg-160 each bind substrate.

Dimer of dimers.

The catalysed reaction is L-lysyl-[protein] + acetyl-CoA = N(6)-acetyl-L-lysyl-[protein] + CoA + H(+). It catalyses the reaction succinyl-CoA + L-lysyl-[protein] = N(6)-succinyl-L-lysyl-[protein] + CoA + H(+). Its function is as follows. Acetylates and succinylates nucleoid-associated, DNA-binding protein HupB. The sequence is that of Acetyl- and succinyl-CoA transferase MT0822 from Mycobacterium tuberculosis (strain CDC 1551 / Oshkosh).